The sequence spans 128 residues: Aspartate 1-decarboxylase (128 aa).

The Schiff-base intermediate with substrate; via pyruvic acid role is filled by Ser-25. The residue at position 25 (Ser-25) is a Pyruvic acid (Ser). Substrate is bound at residue Thr-57. Tyr-58 functions as the Proton donor in the catalytic mechanism. 73-75 (GAA) contributes to the substrate binding site.

This sequence belongs to the PanD family. In terms of assembly, heterooctamer of four alpha and four beta subunits. Pyruvate is required as a cofactor. Is synthesized initially as an inactive proenzyme, which is activated by self-cleavage at a specific serine bond to produce a beta-subunit with a hydroxyl group at its C-terminus and an alpha-subunit with a pyruvoyl group at its N-terminus.

It is found in the cytoplasm. The enzyme catalyses L-aspartate + H(+) = beta-alanine + CO2. It functions in the pathway cofactor biosynthesis; (R)-pantothenate biosynthesis; beta-alanine from L-aspartate: step 1/1. In terms of biological role, catalyzes the pyruvoyl-dependent decarboxylation of aspartate to produce beta-alanine. This chain is Aspartate 1-decarboxylase, found in Chlorobaculum parvum (strain DSM 263 / NCIMB 8327) (Chlorobium vibrioforme subsp. thiosulfatophilum).